A 138-amino-acid chain; its full sequence is Ribosome maturation factor RimP (138 aa).

The protein belongs to the RimP family.

It localises to the cytoplasm. Required for maturation of 30S ribosomal subunits. The polypeptide is Ribosome maturation factor RimP (Campylobacter concisus (strain 13826)).